The following is a 396-amino-acid chain: NAD(P)H oxidoreductase RTN4IP1, mitochondrial (396 aa).

Residues 1–40 (MGVLKTCVLRRSACAAACFWRRTVIPKPPFRGISTTSARS) constitute a mitochondrion transit peptide. Residues 52 to 393 (GKNEVLRFTQ…RGHARGKTVV (342 aa)) enclose the Enoyl reductase (ER) domain. Residues S214, G216, V217, S237, Y255, N276, L300, A341, F343, H386, A387, and R388 each coordinate NADPH.

It belongs to the zinc-containing alcohol dehydrogenase family. Quinone oxidoreductase subfamily. Interacts with RTN4, UQCRC1 and UQCRC2. As to expression, widely expressed in mitochondria-enriched tissues. Found in heart, kidney, liver, brain and spinal cord.

Its subcellular location is the mitochondrion matrix. It is found in the mitochondrion outer membrane. It catalyses the reaction a 3-demethylubiquinone + NADH + 2 H(+) = a 3-demethylubiquinol + NAD(+). It carries out the reaction a 3-demethylubiquinone + NADPH + 2 H(+) = a 3-demethylubiquinol + NADP(+). The catalysed reaction is 3-demethylubiquinone-10 + NADH + 2 H(+) = 3-demethylubiquinol-10 + NAD(+). The enzyme catalyses 3-demethylubiquinone-10 + NADPH + 2 H(+) = 3-demethylubiquinol-10 + NADP(+). The protein operates within cofactor biosynthesis; ubiquinone biosynthesis. NAD(P)H oxidoreductase involved in the ubiquinone biosynthetic pathway. Required for the O-methyltransferase activity of COQ3. Able to catalyze the oxidoreduction of 3-demethylubiquinone into 3-demethylubiquinol in vitro. However, it is unclear if 3-demethylubiquinone constitutes a substrate in vivo. May also play a role in the regulation of retinal ganglion cell (RGC) neurite outgrowth, and hence in the development of the inner retina and optic nerve. Appears to be a potent inhibitor of regeneration following spinal cord injury. In Mus musculus (Mouse), this protein is NAD(P)H oxidoreductase RTN4IP1, mitochondrial.